Here is a 488-residue protein sequence, read N- to C-terminus: Malonate-semialdehyde dehydrogenase (488 aa).

Residues alanine 150, phenylalanine 152, lysine 176, glutamate 179, arginine 180, serine 229, and threonine 251 each contribute to the NAD(+) site. The Nucleophile role is filled by cysteine 284. Residue glutamate 382 coordinates NAD(+).

Belongs to the aldehyde dehydrogenase family. IolA subfamily. As to quaternary structure, homotetramer.

It carries out the reaction 3-oxopropanoate + NAD(+) + CoA + H2O = hydrogencarbonate + acetyl-CoA + NADH + H(+). It catalyses the reaction 2-methyl-3-oxopropanoate + NAD(+) + CoA + H2O = propanoyl-CoA + hydrogencarbonate + NADH + H(+). Its pathway is polyol metabolism; myo-inositol degradation into acetyl-CoA; acetyl-CoA from myo-inositol: step 7/7. Functionally, catalyzes the oxidation of malonate semialdehyde (MSA) and methylmalonate semialdehyde (MMSA) into acetyl-CoA and propanoyl-CoA, respectively. Is involved in a myo-inositol catabolic pathway. Bicarbonate, and not CO2, is the end-product of the enzymatic reaction. This Listeria monocytogenes serotype 4a (strain HCC23) protein is Malonate-semialdehyde dehydrogenase.